Reading from the N-terminus, the 967-residue chain is Leucine-rich repeat-containing G-protein coupled receptor 6 (967 aa).

The N-terminal stretch at 1–24 (MPSPPGLRALWLCAALCASRRAGG) is a signal peptide. Over 25 to 567 (APQPGPGPTA…LFESWGIRLA (543 aa)) the chain is Extracellular. In terms of domain architecture, LRRNT spans 26–66 (PQPGPGPTACPAPCHCQEDGIMLSADCSELGLSAVPGDLDP). The N-linked (GlcNAc...) asparagine glycan is linked to Asn-77. LRR repeat units follow at residues 91–112 (FLEE…AFSG), 115–136 (SLKI…ALWE), 139–160 (SLQS…SFEG), 163–186 (SLRH…NNLP), 187–208 (ALQA…AFQN), 211–232 (SLVV…SFEG), 235–256 (NLET…IRTL), 258–279 (RLQE…AFMG), 282–303 (LLQT…AFQY), 306–328 (KLHT…KGTT), 329–350 (SLEI…MCQQ), 353–374 (RLRV…HRCQ), 375–396 (KLEE…TFSQ), 399–420 (SLQA…AFST), and 423–443 (SLVK…AGLG). N-linked (GlcNAc...) asparagine glycosylation is present at Asn-208. Residues 568-588 (VWAIVLLSVLCNGLVLLTVFA) traverse the membrane as a helical segment. At 589 to 598 (GGPVPLPPVK) the chain is on the cytoplasmic side. The helical transmembrane segment at 599-619 (FVVGAIAGANTLTGISCGLLA) threads the bilayer. At 620–644 (SVDALTFGQFSEYGARWETGLGCRA) the chain is on the extracellular side. Cys-642 and Cys-717 are oxidised to a cystine. Residues 645-665 (TGFLAVLGSEASVLLLTLAAV) form a helical membrane-spanning segment. The Cytoplasmic portion of the chain corresponds to 666-687 (QCSVSVSCVRAYGKSPSLGSVR). A helical transmembrane segment spans residues 688-708 (AGVLGCLALAGLAAALPLASV). The Extracellular portion of the chain corresponds to 709 to 727 (GEYGASPLCLPYAPPEGQP). A helical transmembrane segment spans residues 728–748 (AALGFTVALVMMNSFCFLVVA). The Cytoplasmic portion of the chain corresponds to 749–774 (GAYIKLYCDLPRGDFEAVWDCAMVRH). The chain crosses the membrane as a helical span at residues 775–795 (VAWLIFADGLLYCPVAFLSFA). Topologically, residues 796–809 (SMLGLFPVTPEAVK) are extracellular. A helical transmembrane segment spans residues 810-830 (SVLLVVLPLPACLNPLLYLLF). The Cytoplasmic portion of the chain corresponds to 831-967 (NPHFRDDLRR…PSGLAFASHV (137 aa)).

It belongs to the G-protein coupled receptor 1 family.

Its subcellular location is the cell membrane. In terms of biological role, receptor for R-spondins that potentiates the canonical Wnt signaling pathway and acts as a marker of multipotent stem cells in the epidermis. Upon binding to R-spondins (RSPO1, RSPO2, RSPO3 or RSPO4), associates with phosphorylated LRP6 and frizzled receptors that are activated by extracellular Wnt receptors, triggering the canonical Wnt signaling pathway to increase expression of target genes. In contrast to classical G-protein coupled receptors, does not activate heterotrimeric G-proteins to transduce the signal. May act as a tumor suppressor. The protein is Leucine-rich repeat-containing G-protein coupled receptor 6 (LGR6) of Homo sapiens (Human).